Consider the following 485-residue polypeptide: 2-succinylbenzoate--CoA ligase (485 aa).

This sequence belongs to the ATP-dependent AMP-binding enzyme family. MenE subfamily.

The catalysed reaction is 2-succinylbenzoate + ATP + CoA = 2-succinylbenzoyl-CoA + AMP + diphosphate. It functions in the pathway quinol/quinone metabolism; 1,4-dihydroxy-2-naphthoate biosynthesis; 1,4-dihydroxy-2-naphthoate from chorismate: step 5/7. It participates in quinol/quinone metabolism; menaquinone biosynthesis. Converts 2-succinylbenzoate (OSB) to 2-succinylbenzoyl-CoA (OSB-CoA). The sequence is that of 2-succinylbenzoate--CoA ligase from Enterococcus faecalis (strain ATCC 700802 / V583).